Consider the following 491-residue polypeptide: MKIMSKLNDQQQFRRDKLKNLVKNGFNFPSSTFEHDNLVEINEKFSQKSKEFFLENQVKIAFAGRLIRQRGPFFIIFSQNLQFQAYISKEFQKKNEFIFANLDLGDIIEVSGYLFKTQTGQLSIKVNNFSLLTKSLHPLPDQYYGIENPDEKYRKRYLDLLVNSESAKTFRLRSKIISLIRTFFDSQGFLEVDTPVLQPVLGGASAKPFITYYNSLSQNFYLRIATELPLKKLLVAGFDRVYEIGKIFRNEGFDSTHNPEFTSIEFYQAYANLEKIMDQTENLFRFLFEKLNLDPANFDFSNKKINFLEKFARYDMIEITSKLMNFDLKSANFADLVEKAKKEGVKIEPFFKKGHLINKFFEKFVEPTLINPTFIIGHPIEISPLAKSNPNNPNFTLRAELFICGKEFANMFDELNDPIDQLSRFQAQIIEKNQGNQEASEIDNEFVQALEYGMPPAGGCGIGIDRLTMLLTKNESIREVILFPQLKPKKD.

Residues Glu-400 and Glu-407 each contribute to the Mg(2+) site.

The protein belongs to the class-II aminoacyl-tRNA synthetase family. In terms of assembly, homodimer. Mg(2+) serves as cofactor.

The protein localises to the cytoplasm. It carries out the reaction tRNA(Lys) + L-lysine + ATP = L-lysyl-tRNA(Lys) + AMP + diphosphate. In Mesomycoplasma hyopneumoniae (strain J / ATCC 25934 / NCTC 10110) (Mycoplasma hyopneumoniae), this protein is Lysine--tRNA ligase.